A 689-amino-acid polypeptide reads, in one-letter code: DNA-directed RNA polymerase subunit beta' (689 aa).

Zn(2+)-binding residues include Cys-69, Cys-71, Cys-87, and Cys-90. Residues Asp-489, Asp-491, and Asp-493 each contribute to the Mg(2+) site.

This sequence belongs to the RNA polymerase beta' chain family. RpoC1 subfamily. In terms of assembly, in plastids the minimal PEP RNA polymerase catalytic core is composed of four subunits: alpha, beta, beta', and beta''. When a (nuclear-encoded) sigma factor is associated with the core the holoenzyme is formed, which can initiate transcription. Mg(2+) serves as cofactor. Zn(2+) is required as a cofactor.

It is found in the plastid. The protein resides in the chloroplast. It carries out the reaction RNA(n) + a ribonucleoside 5'-triphosphate = RNA(n+1) + diphosphate. Its function is as follows. DNA-dependent RNA polymerase catalyzes the transcription of DNA into RNA using the four ribonucleoside triphosphates as substrates. The polypeptide is DNA-directed RNA polymerase subunit beta' (Lactuca sativa (Garden lettuce)).